A 374-amino-acid polypeptide reads, in one-letter code: Putative phosphoserine aminotransferase (374 aa).

Arg-48 contacts L-glutamate. Residues 82–83 (AT), Phe-106, Thr-152, Asp-174, and Gln-197 contribute to the pyridoxal 5'-phosphate site. N6-(pyridoxal phosphate)lysine is present on Lys-198. 249–250 (NT) provides a ligand contact to pyridoxal 5'-phosphate.

It belongs to the class-V pyridoxal-phosphate-dependent aminotransferase family. SerC subfamily. As to quaternary structure, homodimer. Pyridoxal 5'-phosphate is required as a cofactor.

It is found in the cytoplasm. The catalysed reaction is O-phospho-L-serine + 2-oxoglutarate = 3-phosphooxypyruvate + L-glutamate. It catalyses the reaction 4-(phosphooxy)-L-threonine + 2-oxoglutarate = (R)-3-hydroxy-2-oxo-4-phosphooxybutanoate + L-glutamate. It participates in amino-acid biosynthesis; L-serine biosynthesis; L-serine from 3-phospho-D-glycerate: step 2/3. The protein operates within cofactor biosynthesis; pyridoxine 5'-phosphate biosynthesis; pyridoxine 5'-phosphate from D-erythrose 4-phosphate: step 3/5. Functionally, catalyzes the reversible conversion of 3-phosphohydroxypyruvate to phosphoserine and of 3-hydroxy-2-oxo-4-phosphonooxybutanoate to phosphohydroxythreonine. The polypeptide is Putative phosphoserine aminotransferase (Mycolicibacterium paratuberculosis (strain ATCC BAA-968 / K-10) (Mycobacterium paratuberculosis)).